Here is a 497-residue protein sequence, read N- to C-terminus: Ankyrin repeat domain-containing protein 53 (497 aa).

Residues 1–10 are compositionally biased toward basic residues; it reads MRRPSRRRSK. The disordered stretch occupies residues 1–65; it reads MRRPSRRRSK…VSSPNSESSQ (65 aa). Over residues 12–27 the composition is skewed to low complexity; sequence STPPRSHTTPRRTGPS. Residues 28–39 are compositionally biased toward basic and acidic residues; that stretch reads DSRRRPGTKEQP. 3 ANK repeats span residues 110-140, 144-177, and 181-210; these read KGFTAIHFAAQKCQLSCLKVLIEEYKYPVDL, KGQTPLHLVIHKNNKSDILPCIDYLLKKGAAINS, and NGSTPLHLASCNGLLGCIKLLVQSGANVHA. Positions 239–264 form a coiled coil; the sequence is WKHDKKVLAQEMEKLRTLKEKLTILE.

In terms of assembly, interacts with PSRC1; recruited by PSRC1 to the spindle during mitosis. Post-translationally, phosphorylated during mitosis.

It is found in the cytoplasm. The protein localises to the cytoskeleton. The protein resides in the spindle. It localises to the spindle pole. Its function is as follows. Required for normal progression through mitosis. Involved in chromosome alignment and cytokinesis via regulation of microtubules polymerization. In Mus musculus (Mouse), this protein is Ankyrin repeat domain-containing protein 53 (Ankrd53).